The primary structure comprises 60 residues: Large ribosomal subunit protein bL32 (60 aa).

It belongs to the bacterial ribosomal protein bL32 family.

The chain is Large ribosomal subunit protein bL32 from Kosmotoga olearia (strain ATCC BAA-1733 / DSM 21960 / TBF 19.5.1).